Here is a 184-residue protein sequence, read N- to C-terminus: Elongation factor P (184 aa).

Belongs to the elongation factor P family.

It is found in the cytoplasm. The protein operates within protein biosynthesis; polypeptide chain elongation. Involved in peptide bond synthesis. Stimulates efficient translation and peptide-bond synthesis on native or reconstituted 70S ribosomes in vitro. Probably functions indirectly by altering the affinity of the ribosome for aminoacyl-tRNA, thus increasing their reactivity as acceptors for peptidyl transferase. This Thermus thermophilus (strain ATCC BAA-163 / DSM 7039 / HB27) protein is Elongation factor P.